We begin with the raw amino-acid sequence, 237 residues long: Large ribosomal subunit protein uL1 (237 aa).

Belongs to the universal ribosomal protein uL1 family. As to quaternary structure, part of the 50S ribosomal subunit.

Its function is as follows. Binds directly to 23S rRNA. The L1 stalk is quite mobile in the ribosome, and is involved in E site tRNA release. Protein L1 is also a translational repressor protein, it controls the translation of the L11 operon by binding to its mRNA. This chain is Large ribosomal subunit protein uL1, found in Nocardia farcinica (strain IFM 10152).